The following is a 34-amino-acid chain: GFWKKVGSAAWGGVKAAAKGAAVGGLNALAKHIQ.

Has strong antibacterial activity against the Gram-positive bacteria M.luteus, S.aureus, B.megaterium, A.viridans and E.faecalis, and against the Gram-negative bacteria K.pneumoniae, E.coli DH5alpha, S.typhimurium, P.aeruginosa and E.aerogenes. Lacks hemolytic activity against sheep erythrocytes. This is Papillosin from Halocynthia papillosa (Red sea-squirt).